Here is a 232-residue protein sequence, read N- to C-terminus: Charged multivesicular body protein 4c (232 aa).

Disordered stretches follow at residues 1–23 and 177–232; these read MSKL…PSAQ and NKKM…AWAT. The tract at residues 1 to 153 is intramolecular interaction with C-terminus; that stretch reads MSKLGKFFKG…EISEAFSQRV (153 aa). Coiled coils occupy residues 21-45 and 125-185; these read SAQE…YLEN and LNKI…SLEL. The segment at 154–232 is intramolecular interaction with N-terminus; sequence QFADGFDEAE…DFKQLAAWAT (79 aa). The residue at position 210 (Ser-210) is a Phosphoserine; by AURKB.

The protein belongs to the SNF7 family. Probable core component of the endosomal sorting required for transport complex III (ESCRT-III). ESCRT-III components are thought to multimerize to form a flat lattice on the perimeter membrane of the endosome. Several assembly forms of ESCRT-III may exist that interact and act sequentially. Self-associates. Interacts with CHMP2A. Interacts with CHMP4A. Interacts with CHMP4B. Interacts with CHMP6. Interacts with VPS4A. Interacts with PDCD6IP; the interaction is direct. In terms of processing, phosphorylated at Ser-210 by AURKB during cytokinesis: together with ZFYVE19/ANCHR, phosphorylated CHMP4C retains abscission-competent VPS4 (VPS4A and/or VPS4B) at the midbody ring until abscission checkpoint signaling is terminated at late cytokinesis.

Its subcellular location is the cytoplasm. It is found in the cytosol. The protein localises to the late endosome membrane. The protein resides in the midbody. It localises to the midbody ring. Functionally, probable core component of the endosomal sorting required for transport complex III (ESCRT-III) which is involved in multivesicular bodies (MVBs) formation and sorting of endosomal cargo proteins into MVBs. MVBs contain intraluminal vesicles (ILVs) that are generated by invagination and scission from the limiting membrane of the endosome and mostly are delivered to lysosomes enabling degradation of membrane proteins, such as stimulated growth factor receptors, lysosomal enzymes and lipids. The MVB pathway appears to require the sequential function of ESCRT-O, -I,-II and -III complexes. ESCRT-III proteins mostly dissociate from the invaginating membrane before the ILV is released. The ESCRT machinery also functions in topologically equivalent membrane fission events, such as the terminal stages of cytokinesis. Key component of the cytokinesis checkpoint, a process required to delay abscission to prevent both premature resolution of intercellular chromosome bridges and accumulation of DNA damage: upon phosphorylation by AURKB, together with ZFYVE19/ANCHR, retains abscission-competent VPS4 (VPS4A and/or VPS4B) at the midbody ring until abscission checkpoint signaling is terminated at late cytokinesis. Deactivation of AURKB results in dephosphorylation of CHMP4C followed by its dissociation from ANCHR and VPS4 and subsequent abscission. ESCRT-III proteins are believed to mediate the necessary vesicle extrusion and/or membrane fission activities, possibly in conjunction with the AAA ATPase VPS4. CHMP4A/B/C are required for the exosomal release of SDCBP, CD63 and syndecan. The protein is Charged multivesicular body protein 4c (Chmp4c) of Mus musculus (Mouse).